The sequence spans 355 residues: Alanine racemase (355 aa).

The Proton acceptor; specific for D-alanine role is filled by K34. Residue K34 is modified to N6-(pyridoxal phosphate)lysine. R133 is a substrate binding site. The active-site Proton acceptor; specific for L-alanine is the Y249. Residue M297 coordinates substrate.

The protein belongs to the alanine racemase family. It depends on pyridoxal 5'-phosphate as a cofactor.

The enzyme catalyses L-alanine = D-alanine. It participates in amino-acid biosynthesis; D-alanine biosynthesis; D-alanine from L-alanine: step 1/1. Its function is as follows. Catalyzes the interconversion of L-alanine and D-alanine. May also act on other amino acids. The sequence is that of Alanine racemase (alr) from Rickettsia peacockii (strain Rustic).